The chain runs to 253 residues: Succinate dehydrogenase iron-sulfur subunit (253 aa).

Positions 64, 69, and 84 each coordinate [2Fe-2S] cluster. One can recognise a 4Fe-4S ferredoxin-type domain in the interval 146 to 174 (RQWAYELSKCMTCGVCLEACPNVNSKSKF). Residues Cys155, Cys158, and Cys161 each coordinate [4Fe-4S] cluster. 3 residues coordinate [3Fe-4S] cluster: Cys165, Cys212, and Cys218. Cys222 contributes to the [4Fe-4S] cluster binding site.

This sequence belongs to the succinate dehydrogenase/fumarate reductase iron-sulfur protein family. As to quaternary structure, in B.subtilis succinate dehydrogenase forms part of an enzyme complex containing three subunits: a flavoprotein, an iron-sulfur protein and cytochrome b-558. [2Fe-2S] cluster is required as a cofactor. It depends on [3Fe-4S] cluster as a cofactor. The cofactor is [4Fe-4S] cluster.

The catalysed reaction is a quinone + succinate = fumarate + a quinol. It functions in the pathway carbohydrate metabolism; tricarboxylic acid cycle; fumarate from succinate (bacterial route): step 1/1. This is Succinate dehydrogenase iron-sulfur subunit (sdhB) from Bacillus subtilis (strain 168).